The chain runs to 175 residues: Vesicle-associated membrane protein-associated protein SCS22 (175 aa).

In terms of domain architecture, MSP spans 1–125; it reads MRIVPEKLVF…DDIVFKKIKI (125 aa). The Cytoplasmic portion of the chain corresponds to 1 to 154; sequence MRIVPEKLVF…RAPSAGNGQS (154 aa). The segment at 133–152 is disordered; that stretch reads RKPSGNHDAESARAPSAGNG. The chain crosses the membrane as a helical; Anchor for type IV membrane protein span at residues 155-175; that stretch reads LSSRALLIITVIALLVGWIYY.

This sequence belongs to the VAMP-associated protein (VAP) (TC 9.B.17) family.

The protein localises to the membrane. In terms of biological role, targets proteins containing a FFAT motif to membranes. Involved in regulation of phospholipid metabolism. The protein is Vesicle-associated membrane protein-associated protein SCS22 (SCS22) of Saccharomyces cerevisiae (strain ATCC 204508 / S288c) (Baker's yeast).